We begin with the raw amino-acid sequence, 422 residues long: Dihydroorotase (422 aa).

His59 and His61 together coordinate Zn(2+). Substrate contacts are provided by residues 61 to 63 (HFR) and Asn93. Positions 150, 177, and 230 each coordinate Zn(2+). Substrate is bound at residue Asn276. Asp303 contributes to the Zn(2+) binding site. The active site involves Asp303. His307 lines the substrate pocket.

The protein belongs to the metallo-dependent hydrolases superfamily. DHOase family. Class I DHOase subfamily. It depends on Zn(2+) as a cofactor.

The enzyme catalyses (S)-dihydroorotate + H2O = N-carbamoyl-L-aspartate + H(+). It participates in pyrimidine metabolism; UMP biosynthesis via de novo pathway; (S)-dihydroorotate from bicarbonate: step 3/3. Catalyzes the reversible cyclization of carbamoyl aspartate to dihydroorotate. In Streptococcus pyogenes serotype M3 (strain ATCC BAA-595 / MGAS315), this protein is Dihydroorotase.